The sequence spans 136 residues: Large ribosomal subunit protein uL16 (136 aa).

This sequence belongs to the universal ribosomal protein uL16 family. As to quaternary structure, part of the 50S ribosomal subunit.

In terms of biological role, binds 23S rRNA and is also seen to make contacts with the A and possibly P site tRNAs. The polypeptide is Large ribosomal subunit protein uL16 (Salmonella agona (strain SL483)).